The primary structure comprises 671 residues: Arginine--tRNA ligase (671 aa).

Residues 124-134 carry the 'HIGH' region motif; the sequence is PNVAKPMHVGH. The tract at residues 223–254 is disordered; it reads KSDAKTAKEVSDQSESDENLKPKDKKKLRKNA. Residues 224–233 are compositionally biased toward basic and acidic residues; it reads SDAKTAKEVS.

It belongs to the class-I aminoacyl-tRNA synthetase family. As to quaternary structure, monomer.

Its subcellular location is the cytoplasm. The catalysed reaction is tRNA(Arg) + L-arginine + ATP = L-arginyl-tRNA(Arg) + AMP + diphosphate. This Rhodopirellula baltica (strain DSM 10527 / NCIMB 13988 / SH1) protein is Arginine--tRNA ligase.